The following is a 300-amino-acid chain: MVQALVFAVGIVGNILSFLVILAPVPTFYRVYKKKSTESFQSVPYAVALLSAMLWLYYALLTSDLLLLSINSIGCLVESLYLTVYLLYAPRQAMAFTLKLVCAMNLALFAAVVAALQLLVKATDRRVTLAGGIGASFALAVFVAPLTIIRQVIRTKSVEFMPFWLSFFLTLSAVVWFFYGLLMKDFFVATPNVLGLLFGLAQMVLYVVYKNPKKNSAVSEAAAAQQVEVKDQQQLQMQLQASPAVAPLDVDADADADLEAAAPATPQRPADDDAIDHRSVVVDIPPPPQPPPALPAVEVA.

At Met-1–Ala-4 the chain is on the extracellular side. A helical transmembrane segment spans residues Leu-5–Val-25. A MtN3/slv 1 domain is found at Ala-8–Gln-92. The Cytoplasmic portion of the chain corresponds to Pro-26–Glu-38. A helical membrane pass occupies residues Ser-39 to Leu-61. The Extracellular portion of the chain corresponds to Thr-62–Leu-67. A helical membrane pass occupies residues Leu-68–Tyr-88. Residues Ala-89 to Lys-99 are Cytoplasmic-facing. Residues Leu-100–Val-120 traverse the membrane as a helical segment. Topologically, residues Lys-121–Thr-128 are extracellular. Residues Leu-129–Ile-149 traverse the membrane as a helical segment. The MtN3/slv 2 domain occupies Gly-131–Lys-213. The Cytoplasmic portion of the chain corresponds to Arg-150–Pro-162. The chain crosses the membrane as a helical span at residues Phe-163–Met-183. At Lys-184 to Asp-185 the chain is on the extracellular side. A helical membrane pass occupies residues Phe-186–Tyr-206. Topologically, residues Val-207–Ala-300 are cytoplasmic. Residues Ala-256–Ala-300 are disordered. Over residues Pro-269–Val-280 the composition is skewed to basic and acidic residues. Pro residues predominate over residues Ile-284–Leu-294.

It belongs to the SWEET sugar transporter family. In terms of assembly, forms homooligomers and/or heterooligomers.

The protein resides in the cell membrane. Its function is as follows. Mediates both low-affinity uptake and efflux of sugar across the plasma membrane. Confers blight susceptibility. Confers TAL effector-mediated susceptibility to Xanthomonas oryzae pv. oryzae. This chain is Bidirectional sugar transporter SWEET12 (SWEET12), found in Oryza sativa subsp. japonica (Rice).